Consider the following 398-residue polypeptide: MKFLQTSLIAAALPAALVSGRFVIENEGDNVQLDEPAKYLIELSPGETQWVTEEDKWDLRRNGQNFMDITDTQELGTLRAWTQSQASVAFPDKCVKQKEVGELAGHLTKDGMRRNLEKLTSFHTRYYKSDYGRQSSEWVLERINGIIKDAGAEDTVTAEHFGHSWPQSSVIARIPGKTNTTVIIGAHQDSINLWLPSILGAPGADDDGSGTVTIMEVFHTLLKAKDVVGGSAPNTVEFHWYSAEEGGLLGSQAIFQSYEKEGRDVKAMLQQDMTGFVQGTEDAGKPESVGVITDFVHPGLTAFIKKVIEEYCSIPWVETKCGYACSDHASASKAGYPSAFVIESAFENSDQHIHGTDDLIKYLSFDHMLEHAKMTLGLVYELAYHDFSSKAVEEPSEL.

A signal peptide spans 1–20 (MKFLQTSLIAAALPAALVSG). Positions 21-87 (RFVIENEGDN…LRAWTQSQAS (67 aa)) are excised as a propeptide. Asn179 carries N-linked (GlcNAc...) asparagine glycosylation. 4 residues coordinate Zn(2+): His187, Asp206, Glu245, and Asp272. Residues Cys321 and Cys325 are joined by a disulfide bond. Residue His354 participates in Zn(2+) binding.

It belongs to the peptidase M28 family. M28E subfamily. In terms of assembly, monomer. Requires Zn(2+) as cofactor.

Its subcellular location is the secreted. Extracellular aminopeptidase that allows assimilation of proteinaceous substrates. The chain is Leucine aminopeptidase 1 (lap1) from Trichoderma harzianum (Hypocrea lixii).